We begin with the raw amino-acid sequence, 59 residues long: Large ribosomal subunit protein bL32 (59 aa).

The interval 35 to 59 (EAHLRHHISPNGYYRGRKVVKTKND) is disordered. Basic residues predominate over residues 49 to 59 (RGRKVVKTKND).

It belongs to the bacterial ribosomal protein bL32 family.

This Polynucleobacter asymbioticus (strain DSM 18221 / CIP 109841 / QLW-P1DMWA-1) (Polynucleobacter necessarius subsp. asymbioticus) protein is Large ribosomal subunit protein bL32.